Consider the following 158-residue polypeptide: Small ribosomal subunit protein bS6 (158 aa).

Over residues 92–149 (RVDEHEEGPSAMMRKADRDRERDDRGPREGGFRGDREGRGDRDGFRGDRGPRRPREDA) the composition is skewed to basic and acidic residues. Residues 92–158 (RVDEHEEGPS…ADAPAAAVEE (67 aa)) are disordered.

Belongs to the bacterial ribosomal protein bS6 family.

Binds together with bS18 to 16S ribosomal RNA. In Rhodopseudomonas palustris (strain ATCC BAA-98 / CGA009), this protein is Small ribosomal subunit protein bS6.